A 542-amino-acid chain; its full sequence is DNA-binding protein modulo (542 aa).

The segment at 1–166 is disordered; that stretch reads MAQKKAVTVK…RGIPKVKVGK (166 aa). Residues serine 42 and serine 44 each carry the phosphoserine modification. Over residues 59-114 the composition is skewed to acidic residues; sequence SEEDESDVEEQNDEQPGDDSDFETEEAAGLIDDEAEEDEEYNSDDEEDDDDDELEP. Serine 120, serine 129, and serine 142 each carry phosphoserine. Acidic residues predominate over residues 123 to 135; sequence ADEVDESDDDEEA. Positions 136–158 are enriched in basic and acidic residues; that stretch reads PVEKPVSKKSEKANSEKSEENRG. RRM domains follow at residues 175 to 251, 258 to 331, 340 to 429, and 420 to 489; these read QIVF…QPRN, RTVV…RISQ, LTLV…NLTS, and RAIL…PNSL. Serine 304 bears the Phosphoserine mark. Serine 330 is modified (phosphoserine; by PKA). A Phosphoserine modification is found at serine 443. Positions 505-542 are disordered; sequence RAPRKFQKDTKPNFGKKPFNKRPAQENGGKSFVKRARF.

Post-translationally, the N-terminus is blocked.

The protein resides in the nucleus. Functionally, its capacity to bind DNA and protein(s), and its differential expression during development suggest a role in the regulation of gene expression during Drosophila development. It could, in interaction with other factors, be required for the translation of instructions provided by pattern forming genes and controls, via chromatin changes, the activity of genes critical for the process of morphogenesis of several embryonic territories. This Drosophila melanogaster (Fruit fly) protein is DNA-binding protein modulo (mod).